A 604-amino-acid polypeptide reads, in one-letter code: Terpenoid synthase 30 (604 aa).

5 residues coordinate Mg(2+): Asn-356, Asp-360, Asn-500, Thr-504, and Glu-508. The DDXXD motif; degenerate motif lies at 356 to 360; that stretch reads NDVCD.

The protein belongs to the terpene synthase family. Tpsa subfamily. It depends on Mg(2+) as a cofactor. Requires Mn(2+) as cofactor.

Its subcellular location is the cytoplasm. The protein operates within secondary metabolite biosynthesis; terpenoid biosynthesis. In terms of biological role, involved in terpene biosynthesis in roots. Possesses sesquiterpene (C15) synthase activity and diterpene (C20) synthase activity in vitro. The sequence is that of Terpenoid synthase 30 from Arabidopsis thaliana (Mouse-ear cress).